Reading from the N-terminus, the 251-residue chain is Putative integrase/recombinase y4eF (251 aa).

One can recognise a Core-binding (CB) domain in the interval 1-40 (MLGREDIRTYQVYLANEKKLAPGSIHIALSALRFFFNVTL). One can recognise a Tyr recombinase domain in the interval 58 to 231 (KLPIILSPDE…ATNKVCATES (174 aa)). Catalysis depends on residues Arg93, Lys118, His183, Arg186, and His209. Residue Tyr218 is the O-(3'-phospho-DNA)-tyrosine intermediate of the active site.

This sequence belongs to the 'phage' integrase family.

This chain is Putative integrase/recombinase y4eF, found in Sinorhizobium fredii (strain NBRC 101917 / NGR234).